Reading from the N-terminus, the 142-residue chain is Large ribosomal subunit protein uL11 (142 aa).

It belongs to the universal ribosomal protein uL11 family. As to quaternary structure, part of the ribosomal stalk of the 50S ribosomal subunit. Interacts with L10 and the large rRNA to form the base of the stalk. L10 forms an elongated spine to which L12 dimers bind in a sequential fashion forming a multimeric L10(L12)X complex. In terms of processing, one or more lysine residues are methylated.

Functionally, forms part of the ribosomal stalk which helps the ribosome interact with GTP-bound translation factors. The polypeptide is Large ribosomal subunit protein uL11 (Akkermansia muciniphila (strain ATCC BAA-835 / DSM 22959 / JCM 33894 / BCRC 81048 / CCUG 64013 / CIP 107961 / Muc)).